We begin with the raw amino-acid sequence, 152 residues long: Small ribosomal subunit protein uS13 (152 aa).

Residue serine 2 is modified to N-acetylserine. Lysine 91 participates in a covalent cross-link: Glycyl lysine isopeptide (Lys-Gly) (interchain with G-Cter in SUMO2). An N6-acetyllysine; alternate mark is found at lysine 94 and lysine 106. Residues lysine 94 and lysine 106 each participate in a glycyl lysine isopeptide (Lys-Gly) (interchain with G-Cter in SUMO2); alternate cross-link.

The protein belongs to the universal ribosomal protein uS13 family. In terms of assembly, component of the small ribosomal subunit.

The protein localises to the cytoplasm. In terms of biological role, component of the small ribosomal subunit. The ribosome is a large ribonucleoprotein complex responsible for the synthesis of proteins in the cell. The protein is Small ribosomal subunit protein uS13 (RPS18) of Homo sapiens (Human).